The following is a 438-amino-acid chain: Thymidine phosphorylase (438 aa).

The protein belongs to the thymidine/pyrimidine-nucleoside phosphorylase family. As to quaternary structure, homodimer.

The enzyme catalyses thymidine + phosphate = 2-deoxy-alpha-D-ribose 1-phosphate + thymine. It participates in pyrimidine metabolism; dTMP biosynthesis via salvage pathway; dTMP from thymine: step 1/2. In terms of biological role, the enzymes which catalyze the reversible phosphorolysis of pyrimidine nucleosides are involved in the degradation of these compounds and in their utilization as carbon and energy sources, or in the rescue of pyrimidine bases for nucleotide synthesis. This Burkholderia lata (strain ATCC 17760 / DSM 23089 / LMG 22485 / NCIMB 9086 / R18194 / 383) protein is Thymidine phosphorylase.